A 379-amino-acid polypeptide reads, in one-letter code: Anthranilate O-methyltransferase 3 (379 aa).

A compositionally biased stretch (basic and acidic residues) spans 1-10 (MPMRIERDLH). The tract at residues 1–21 (MPMRIERDLHMATGNGETSYT) is disordered. Y20 is a binding site for S-adenosyl-L-homocysteine. Residue Q27 coordinates anthranilate. The S-adenosyl-L-homocysteine site is built by C61, N66, D100, L101, S143, and F144. Residues H164 and W165 each contribute to the anthranilate site. Residues E265 and F267 each contribute to the Mg(2+) site.

The protein belongs to the methyltransferase superfamily. Type-7 methyltransferase family. SABATH subfamily.

The catalysed reaction is anthranilate + S-adenosyl-L-methionine = O-methyl anthranilate + S-adenosyl-L-homocysteine. It carries out the reaction benzoate + S-adenosyl-L-methionine = methyl benzoate + S-adenosyl-L-homocysteine. The enzyme catalyses salicylate + S-adenosyl-L-methionine = methyl salicylate + S-adenosyl-L-homocysteine. Functionally, methyltransferase involved in the biosynthesis of methyl anthranilate in response to stresses. Utilizes anthranilic acid as substrate. Produces exclusively the O-methyl ester. Can also use benzoic acid as substrate. Low activity with salicylic acid. In Zea mays (Maize), this protein is Anthranilate O-methyltransferase 3 (AAMT3).